A 525-amino-acid chain; its full sequence is UPF0288 protein MM_0912 (525 aa).

It belongs to the UPF0288 family.

This Methanosarcina mazei (strain ATCC BAA-159 / DSM 3647 / Goe1 / Go1 / JCM 11833 / OCM 88) (Methanosarcina frisia) protein is UPF0288 protein MM_0912.